The chain runs to 1148 residues: Replication factor C subunit 1 (1148 aa).

Basic and acidic residues predominate over residues 46-56; the sequence is NSSRKEDDFKQ. 2 disordered regions span residues 46–201 and 228–380; these read NSSR…LNDE and TLAM…TNYQ. Lys50 is covalently cross-linked (Glycyl lysine isopeptide (Lys-Gly) (interchain with G-Cter in SUMO2)). Tyr67 carries the phosphotyrosine modification. Ser69, Ser71, Ser73, and Ser108 each carry phosphoserine. Residue Thr110 is modified to Phosphothreonine. Residues 130-141 show a composition bias toward polar residues; that stretch reads RSTNSHLGTSNM. Ser156 carries the post-translational modification Phosphoserine. 2 positions are modified to phosphothreonine: Thr161 and Thr163. Ser164, Ser173, and Ser190 each carry phosphoserine. Residues 234–246 show a composition bias toward basic and acidic residues; sequence EEPKTKKARKDTE. Ser253 carries the post-translational modification Phosphoserine. Basic residues predominate over residues 262-271; that stretch reads EKHKYPHKVK. Residues Ser281 and Ser283 each carry the phosphoserine modification. Residues 288-308 are compositionally biased toward basic and acidic residues; that stretch reads SKYESSKESQQHSKSSADKIG. Ser312 carries the phosphoserine modification. Composition is skewed to basic and acidic residues over residues 323–353 and 362–376; these read KRKE…ETKT and AKKE…EKKR. Ser368 bears the Phosphoserine mark. Positions 402–492 constitute a BRCT domain; it reads GAENCLEGLI…PGKKSKYEIA (91 aa). Basic and acidic residues-rich tracts occupy residues 496–507 and 520–538; these read EMKKESKLERTP and SKKE…RDSL. The segment at 496 to 538 is disordered; the sequence is EMKKESKLERTPQKNVQGKRKISPSKKESESKKSRPTSKRDSL. Residue Ser537 is modified to Phosphoserine. 650–657 provides a ligand contact to ATP; it reads SGPPGVGK. The interval 1081-1148 is disordered; that stretch reads KASRHSTSPS…RKGKGKSSKK (68 aa). Positions 1094-1105 are enriched in acidic residues; that stretch reads EYNEELNEDDSQ. 2 positions are modified to phosphoserine: Ser1104 and Ser1106. The short motif at 1120-1124 is the Nuclear localization signal element; that stretch reads IKKKT. The span at 1130–1140 shows a compositional bias: basic and acidic residues; sequence SKPEKDKEPRK.

It belongs to the activator 1 large subunit family. As to quaternary structure, large subunit of the RFC complex, an heteropentameric complex consisting of RFC1 and four small subunits RFC2, RFC3, RFC4 and RFC5; the RFC complex interacts with PCNA and the interaction involves RFC1. As to expression, wide tissue distribution. Undetectable in placental tissue.

It localises to the nucleus. Functionally, subunit of the replication factor C (RFC) complex which acts during elongation of primed DNA templates by DNA polymerases delta and epsilon, and is necessary for ATP-dependent loading of proliferating cell nuclear antigen (PCNA) onto primed DNA. This subunit binds to the primer-template junction. Binds the PO-B transcription element as well as other GA rich DNA sequences. Can bind single- or double-stranded DNA. This Homo sapiens (Human) protein is Replication factor C subunit 1 (RFC1).